The chain runs to 1135 residues: Vinculin (1135 aa).

The N-terminal globular head stretch occupies residues 2 to 835 (PVFHTRTIES…GAVAKVREAF (834 aa)). Tyrosine 100 carries the phosphotyrosine modification. A talin-interaction region spans residues 168 to 208 (MTKMAKMIDERQQELTHQEHRVMLVNSMNTVKELLPVLISA). Tandem repeats lie at residues 259–369 (ASKD…KVEN), 370–479 (AARK…KTNR), and 480–589 (AVAN…RMQE). A 3 X 112 AA tandem repeats region spans residues 259–589 (ASKDTEAMKR…LKDLKARMQE (331 aa)). 2 positions are modified to phosphotyrosine: tyrosine 537 and tyrosine 822. The segment at 836–878 (QPQEPDFPPPPPDLEHLHLTDELAPPKPPLPEGEVPPPRPPPP) is linker (Pro-rich). The interval 837-888 (PQEPDFPPPPPDLEHLHLTDELAPPKPPLPEGEVPPPRPPPPEEKDEEFPEQ) is disordered. A compositionally biased stretch (pro residues) spans 860–876 (PPKPPLPEGEVPPPRPP). Residues 879-1135 (EEKDEEFPEQ…RWVRKTPWYQ (257 aa)) are C-terminal tail. Facilitates phospholipid membrane insertion regions lie at residues 1004–1047 (RLVR…KRIR) and 1121–1135 (AGFTLRWVRKTPWYQ). Tyrosine 1134 is subject to Phosphotyrosine; by SRC-type Tyr-kinases.

The protein belongs to the vinculin/alpha-catenin family. In terms of assembly, exhibits self-association properties. Interacts with APBB1IP, NRAP and TLN1. Interacts with CTNNB1 and this interaction is necessary for its localization to the cell-cell junctions and for its function in regulating cell surface expression of E-cadherin. Phosphorylated; on serines, threonines and tyrosines. Phosphorylation on Tyr-1134 in activated platelets affects head-tail interactions and cell spreading but has no effect on actin binding nor on localization to focal adhesion plaques. Post-translationally, acetylated; mainly by myristic acid but also by a small amount of palmitic acid. Isoform Metavinculin is muscle-specific.

It localises to the cell membrane. The protein localises to the cell junction. Its subcellular location is the adherens junction. It is found in the focal adhesion. The protein resides in the cytoplasm. It localises to the cytoskeleton. The protein localises to the sarcolemma. Its subcellular location is the cell projection. It is found in the podosome. Functionally, actin filament (F-actin)-binding protein involved in cell-matrix adhesion and cell-cell adhesion. Regulates cell-surface E-cadherin expression and potentiates mechanosensing by the E-cadherin complex. May also play important roles in cell morphology and locomotion. The sequence is that of Vinculin (VCL) from Gallus gallus (Chicken).